A 545-amino-acid chain; its full sequence is Probable acyl-activating enzyme 4 (545 aa).

This sequence belongs to the ATP-dependent AMP-binding enzyme family. As to expression, expressed in roots, leaves, stems, flowers and developing seeds.

Its function is as follows. May act as an acid--thiol ligase that activates carboxylic acids by forming acyl-CoAs. This chain is Probable acyl-activating enzyme 4 (AEE4), found in Arabidopsis thaliana (Mouse-ear cress).